The following is a 345-amino-acid chain: Fibronectin type 3 and ankyrin repeat domains protein 1 (345 aa).

The region spanning 8 to 108 (PPSKPHPPVV…LVSVSTTREP (101 aa)) is the Fibronectin type-III domain. ANK repeat units lie at residues 109-139 (ISSE…KVDV), 143-172 (FGFT…DVNL), 176-205 (SGKD…SWQA), 209-238 (GGCT…EVDV), 243-273 (SGWT…NVNV), and 277-306 (NGKT…DASV).

Interacts with COPS5; regulates the phosphorylation of JUN and the transcriptional activity of AP-1. Interacts with RYBP; may prevent the ubiquitin-mediated proteasomal degradation of FANK1. Polyubiquitinated. Polyubiquitination leads to proteasomal degradation. As to expression, mostly restricted to testis.

It localises to the nucleus. The protein resides in the cytoplasm. The protein localises to the cytosol. It is found in the cytoskeleton. Its subcellular location is the cilium basal body. It localises to the cell projection. The protein resides in the cilium. In terms of biological role, through the activation of JUN and AP-1-mediated transcription, may regulate apoptosis. This chain is Fibronectin type 3 and ankyrin repeat domains protein 1, found in Homo sapiens (Human).